A 1571-amino-acid chain; its full sequence is Pentafunctional AROM polypeptide (1571 aa).

The interval 1–384 (MEQPTTIQIL…HEQKASVVSN (384 aa)) is 3-dehydroquinate synthase. NAD(+) contacts are provided by residues 44–46 (DTN), 81–84 (ESSK), 114–116 (GGV), and Asp119. Arg130 is a 7-phospho-2-dehydro-3-deoxy-D-arabino-heptonate binding site. 139–140 (TT) contributes to the NAD(+) binding site. 7-phospho-2-dehydro-3-deoxy-D-arabino-heptonate-binding residues include Asp146 and Lys152. NAD(+) is bound at residue Lys161. Position 162 (Asn162) interacts with 7-phospho-2-dehydro-3-deoxy-D-arabino-heptonate. NAD(+)-binding positions include 179 to 182 (FLNT) and Asn190. Glu194 contacts Zn(2+). 7-phospho-2-dehydro-3-deoxy-D-arabino-heptonate-binding positions include 194–197 (EVIK) and Lys250. Glu260 (proton acceptor; for 3-dehydroquinate synthase activity) is an active-site residue. Residues 264–268 (RNLLN) and His271 each bind 7-phospho-2-dehydro-3-deoxy-D-arabino-heptonate. Residue His271 coordinates Zn(2+). The active-site Proton acceptor; for 3-dehydroquinate synthase activity is His275. 7-phospho-2-dehydro-3-deoxy-D-arabino-heptonate is bound by residues His287 and Lys356. His287 contributes to the Zn(2+) binding site. The interval 397 to 843 (VLPGIPKPLN…WDALAQTFKV (447 aa)) is EPSP synthase. The For EPSP synthase activity role is filled by Cys825. The shikimate kinase stretch occupies residues 866–1057 (ASIFIIGMRG…KKKDHSFFVS (192 aa)). An ATP-binding site is contributed by 872 to 879 (GMRGAGKT). Residues 1058–1278 (LTLPDLQLSA…AAPGQVSAKD (221 aa)) form a 3-dehydroquinase region. Catalysis depends on His1181, which acts as the Proton acceptor; for 3-dehydroquinate dehydratase activity. Catalysis depends on Lys1209, which acts as the Schiff-base intermediate with substrate; for 3-dehydroquinate dehydratase activity. The tract at residues 1291–1571 (AKKFALFGKP…EDARAAVMNI (281 aa)) is shikimate dehydrogenase.

In the N-terminal section; belongs to the sugar phosphate cyclases superfamily. Dehydroquinate synthase family. It in the 2nd section; belongs to the EPSP synthase family. This sequence in the 3rd section; belongs to the shikimate kinase family. The protein in the 4th section; belongs to the type-I 3-dehydroquinase family. In the C-terminal section; belongs to the shikimate dehydrogenase family. In terms of assembly, homodimer. Zn(2+) serves as cofactor.

It is found in the cytoplasm. The enzyme catalyses 7-phospho-2-dehydro-3-deoxy-D-arabino-heptonate = 3-dehydroquinate + phosphate. It carries out the reaction 3-dehydroquinate = 3-dehydroshikimate + H2O. The catalysed reaction is shikimate + NADP(+) = 3-dehydroshikimate + NADPH + H(+). It catalyses the reaction shikimate + ATP = 3-phosphoshikimate + ADP + H(+). The enzyme catalyses 3-phosphoshikimate + phosphoenolpyruvate = 5-O-(1-carboxyvinyl)-3-phosphoshikimate + phosphate. It participates in metabolic intermediate biosynthesis; chorismate biosynthesis; chorismate from D-erythrose 4-phosphate and phosphoenolpyruvate: step 2/7. Its pathway is metabolic intermediate biosynthesis; chorismate biosynthesis; chorismate from D-erythrose 4-phosphate and phosphoenolpyruvate: step 3/7. The protein operates within metabolic intermediate biosynthesis; chorismate biosynthesis; chorismate from D-erythrose 4-phosphate and phosphoenolpyruvate: step 4/7. It functions in the pathway metabolic intermediate biosynthesis; chorismate biosynthesis; chorismate from D-erythrose 4-phosphate and phosphoenolpyruvate: step 5/7. It participates in metabolic intermediate biosynthesis; chorismate biosynthesis; chorismate from D-erythrose 4-phosphate and phosphoenolpyruvate: step 6/7. Its function is as follows. The AROM polypeptide catalyzes 5 consecutive enzymatic reactions in prechorismate polyaromatic amino acid biosynthesis. This is Pentafunctional AROM polypeptide from Arthroderma otae (strain ATCC MYA-4605 / CBS 113480) (Microsporum canis).